The chain runs to 397 residues: MDVYRIRISVFFLLVLLTFAALTTATNIPRRQLSNKKYKGPCRAENAIDKCWRCDPNWAENRQKMADCALGFGSNAIGGKLGRIYVVTDNSDDDVVDPKPGTLRYGVIQKEPLWIIFGKNMKIKLSRELIVTSNKTIDGRGFNVHIQNGAGIKIQSASNIIISNLRIHNIVPTPGGLLRESEDHVGLRGSDEGDGISIFSSHDIWIDHISMSRATDGLIDAVAASTNITISNCHFTDHEKVMLFGANDHYVLDKDMKITLAYNHFGKRLDQRMPRCRFGFFHLVNNDYTHWERYAIGGSSGATIISQGNRFIAEDELLVKEVTYREKLTASVAEWMKWTWISDGDDMENGATFTPSGDQNLLDKIDHLNLIKPEPSSKVGILTKFSGALSCVKGRPC.

Residues Met1–Ala25 form the signal peptide. Asn134 carries an N-linked (GlcNAc...) asparagine glycan. The Ca(2+) site is built by Asp191, Asp216, and Asp220. N-linked (GlcNAc...) asparagine glycosylation is present at Asn227. Residue Arg272 is part of the active site.

This sequence belongs to the polysaccharide lyase 1 family. The cofactor is Ca(2+).

It catalyses the reaction Eliminative cleavage of (1-&gt;4)-alpha-D-galacturonan to give oligosaccharides with 4-deoxy-alpha-D-galact-4-enuronosyl groups at their non-reducing ends.. It functions in the pathway glycan metabolism; pectin degradation; 2-dehydro-3-deoxy-D-gluconate from pectin: step 2/5. The polypeptide is Pectate lyase (Nicotiana tabacum (Common tobacco)).